The following is a 130-amino-acid chain: Small ribosomal subunit protein uS9 (130 aa).

Over residues 105 to 115 (TRDSRQVERKK) the composition is skewed to basic and acidic residues. The tract at residues 105-130 (TRDSRQVERKKVGFRKSRKRTQFSKR) is disordered. Residues 116-130 (VGFRKSRKRTQFSKR) are compositionally biased toward basic residues.

Belongs to the universal ribosomal protein uS9 family.

The sequence is that of Small ribosomal subunit protein uS9 from Buchnera aphidicola subsp. Schizaphis graminum (strain Sg).